The sequence spans 161 residues: uncharacterized protein (161 aa).

Residues 72–134 (CAICLDNLQN…EAQQTCPTCR (63 aa)) form an RING-type zinc finger. The segment at 140–161 (DKEVEEEERQRNLEELHDSMYG) is disordered.

This is an uncharacterized protein from Caenorhabditis elegans.